Here is a 311-residue protein sequence, read N- to C-terminus: Oxidoreductase NAD-binding domain-containing protein 1 (311 aa).

The first 17 residues, 1–17, serve as a signal peptide directing secretion; that stretch reads MACAAVMIPGLLRCSVG. Residues 50 to 186 enclose the FAD-binding FR-type domain; it reads HMERTASVLR…GGVGINPLLS (137 aa). An NAD(+)-binding site is contributed by 178 to 183; the sequence is GVGINP.

The sequence is that of Oxidoreductase NAD-binding domain-containing protein 1 (OXNAD1) from Pongo abelii (Sumatran orangutan).